The sequence spans 248 residues: Mannosylfructose-phosphate phosphatase (248 aa).

This sequence belongs to the sucrose phosphatase family.

It carries out the reaction beta-D-fructofuranosyl alpha-D-mannopyranoside 6(F)-phosphate + H2O = beta-D-fructofuranosyl alpha-D-mannopyranoside + phosphate. The protein operates within carbohydrate metabolism; mannosylfructose biosynthesis; beta-D-fructofuranosyl alpha-D-mannopyranoside from D-fructose 6-phosphate and GDP-alpha-D-mannose: step 2/2. Its activity is regulated as follows. Inhibited by the phosphatase inhibitors fluoride, molybdate and orthovanadate. The polypeptide is Mannosylfructose-phosphate phosphatase (Agrobacterium fabrum (strain C58 / ATCC 33970) (Agrobacterium tumefaciens (strain C58))).